Consider the following 201-residue polypeptide: Large ribosomal subunit protein uL4 (201 aa).

Residues 42–67 are disordered; it reads GNSAQKTRSEVSGGGKKPWNQKGTGR.

This sequence belongs to the universal ribosomal protein uL4 family. As to quaternary structure, part of the 50S ribosomal subunit.

Its function is as follows. One of the primary rRNA binding proteins, this protein initially binds near the 5'-end of the 23S rRNA. It is important during the early stages of 50S assembly. It makes multiple contacts with different domains of the 23S rRNA in the assembled 50S subunit and ribosome. Forms part of the polypeptide exit tunnel. The protein is Large ribosomal subunit protein uL4 of Legionella pneumophila (strain Lens).